The chain runs to 324 residues: Anthranilate phosphoribosyltransferase (324 aa).

5-phospho-alpha-D-ribose 1-diphosphate is bound by residues glycine 72, 75–76, serine 80, 82–85, 99–107, and serine 111; these read GD, NVST, and KHGNVSITS. Glycine 72 contacts anthranilate. Serine 84 contributes to the Mg(2+) binding site. Asparagine 102 contributes to the anthranilate binding site. Anthranilate is bound at residue arginine 157. Mg(2+) is bound by residues aspartate 215 and glutamate 216.

This sequence belongs to the anthranilate phosphoribosyltransferase family. In terms of assembly, homodimer. It depends on Mg(2+) as a cofactor.

The enzyme catalyses N-(5-phospho-beta-D-ribosyl)anthranilate + diphosphate = 5-phospho-alpha-D-ribose 1-diphosphate + anthranilate. It participates in amino-acid biosynthesis; L-tryptophan biosynthesis; L-tryptophan from chorismate: step 2/5. Its function is as follows. Catalyzes the transfer of the phosphoribosyl group of 5-phosphorylribose-1-pyrophosphate (PRPP) to anthranilate to yield N-(5'-phosphoribosyl)-anthranilate (PRA). The chain is Anthranilate phosphoribosyltransferase from Pyrococcus abyssi (strain GE5 / Orsay).